A 426-amino-acid chain; its full sequence is Adenylosuccinate synthetase (426 aa).

GTP-binding positions include 11-17 (GDEGKGK) and 39-41 (GHT). The active-site Proton acceptor is Asp-12. 2 residues coordinate Mg(2+): Asp-12 and Gly-39. IMP contacts are provided by residues 12 to 15 (DEGK), 37 to 40 (NAGH), Thr-130, Arg-144, Asn-226, Thr-241, and Arg-305. His-40 acts as the Proton donor in catalysis. 301-307 (VTTGRKR) provides a ligand contact to substrate. GTP is bound by residues Arg-307, 333 to 335 (KLD), and 415 to 417 (GTG).

It belongs to the adenylosuccinate synthetase family. In terms of assembly, homodimer. Mg(2+) serves as cofactor.

It is found in the cytoplasm. It carries out the reaction IMP + L-aspartate + GTP = N(6)-(1,2-dicarboxyethyl)-AMP + GDP + phosphate + 2 H(+). It functions in the pathway purine metabolism; AMP biosynthesis via de novo pathway; AMP from IMP: step 1/2. Its function is as follows. Plays an important role in the de novo pathway and in the salvage pathway of purine nucleotide biosynthesis. Catalyzes the first committed step in the biosynthesis of AMP from IMP. The protein is Adenylosuccinate synthetase of Meyerozyma guilliermondii (strain ATCC 6260 / CBS 566 / DSM 6381 / JCM 1539 / NBRC 10279 / NRRL Y-324) (Yeast).